We begin with the raw amino-acid sequence, 64 residues long: Alpha-conotoxin-like Lp1.8 (64 aa).

The first 21 residues, 1–21, serve as a signal peptide directing secretion; the sequence is MGMRMMFTMFLLVVLTTTVVS. Positions 22–41 are excised as a propeptide; that stretch reads FNSDRESNHENRRTSNQITR. 2 disulfide bridges follow: Cys-47/Cys-53 and Cys-48/Cys-61. The segment at 49–51 is lacks the Ser-Xaa-Pro motif that is crucial for potent interaction with nAChR; sequence KDP.

Belongs to the conotoxin A superfamily. Expressed by the venom duct.

It is found in the secreted. Its function is as follows. Alpha-conotoxins act on postsynaptic membranes, they bind to the nicotinic acetylcholine receptors (nAChR) and thus inhibit them. Has possibly a distinct nAChR binding mode from other alpha-conotoxins, due to a different three residue motif (Lys-Xaa-Pro instead of the conserved Ser-Xaa-Pro motif). This is Alpha-conotoxin-like Lp1.8 from Conus leopardus (Leopard cone).